The following is a 61-amino-acid chain: Metallothionein-1D (61 aa).

A beta region spans residues M1–C29. A divalent metal cation is bound by residues C5, C7, C13, C15, C19, C21, C24, C26, C29, C33, C34, C36, C37, C41, C44, C48, C50, C57, C59, and C60. Positions K30 to A61 are alpha.

Belongs to the metallothionein superfamily. Type 1 family. In terms of assembly, monomer.

Metallothioneins have a high content of cysteine residues that bind various heavy metals; these proteins are transcriptionally regulated by both heavy metals and glucocorticoids. In Sus scrofa (Pig), this protein is Metallothionein-1D (MT1D).